Consider the following 23-residue polypeptide: NADP phosphatase 2 (23 aa).

Homodimer.

The protein localises to the cytoplasm. This chain is NADP phosphatase 2, found in Arthrobacter sp. (strain KM).